Here is a 145-residue protein sequence, read N- to C-terminus: Putative phosphatidylglycerol/phosphatidylinositol transfer protein DDB_G0282179 (145 aa).

An N-terminal signal peptide occupies residues 1–20; it reads MIKTILLLLINFMLILIVNG. N-linked (GlcNAc...) asparagine glycosylation is present at Asn-134.

Belongs to the NPC2 family. As to quaternary structure, monomer.

In terms of biological role, catalyzes the intermembrane transfer of phosphatidylglycerol and phosphatidylinositol. The chain is Putative phosphatidylglycerol/phosphatidylinositol transfer protein DDB_G0282179 from Dictyostelium discoideum (Social amoeba).